Reading from the N-terminus, the 126-residue chain is Fluoride-specific ion channel FluC (126 aa).

4 consecutive transmembrane segments (helical) span residues 1–21, 40–60, 72–92, and 104–124; these read MIVI…FGLD, LATL…GGFA, AISI…VATV, and MVNI…GLSL. Na(+)-binding residues include Gly-79 and Thr-82.

This sequence belongs to the fluoride channel Fluc/FEX (TC 1.A.43) family.

It is found in the cell membrane. The catalysed reaction is fluoride(in) = fluoride(out). Na(+) is not transported, but it plays an essential structural role and its presence is essential for fluoride channel function. In terms of biological role, fluoride-specific ion channel. Important for reducing fluoride concentration in the cell, thus reducing its toxicity. This is Fluoride-specific ion channel FluC from Renibacterium salmoninarum (strain ATCC 33209 / DSM 20767 / JCM 11484 / NBRC 15589 / NCIMB 2235).